The sequence spans 479 residues: Monodictyphenone cluster transcriptional coactivator mdpA (479 aa).

An HTH iclR-type domain is found at 77-147 (LAVQNQLLAC…DPGQVAHSAL (71 aa)). Positions 107-126 (IKDVAELAGVPETHLSRIIR) form a DNA-binding region, H-T-H motif. Disordered stretches follow at residues 281-305 (GPTA…HKHD) and 314-333 (TAST…TTNS). Positions 289–298 (HPNPIRPPTP) are enriched in pro residues. Over residues 314–323 (TASTTPASSH) the composition is skewed to low complexity.

Its subcellular location is the nucleus. Its function is as follows. Transcriptional coactivator; part of the gene cluster that mediates the biosynthesis of monodictyphenone, a prenyl xanthone derivative. With mdpE, coregulates the production of monodictyphenone. This Emericella nidulans (strain FGSC A4 / ATCC 38163 / CBS 112.46 / NRRL 194 / M139) (Aspergillus nidulans) protein is Monodictyphenone cluster transcriptional coactivator mdpA.